The sequence spans 177 residues: Translation initiation factor IF-3 (177 aa).

The protein belongs to the IF-3 family. In terms of assembly, monomer.

It localises to the cytoplasm. Functionally, IF-3 binds to the 30S ribosomal subunit and shifts the equilibrium between 70S ribosomes and their 50S and 30S subunits in favor of the free subunits, thus enhancing the availability of 30S subunits on which protein synthesis initiation begins. The chain is Translation initiation factor IF-3 from Rhizobium meliloti (strain 1021) (Ensifer meliloti).